The chain runs to 222 residues: Small ribosomal subunit protein uS3 (222 aa).

Residues 39 to 108 enclose the KH type-2 domain; that stretch reads IRRHIKEKLY…TISLDIKEIK (70 aa).

This sequence belongs to the universal ribosomal protein uS3 family. As to quaternary structure, part of the 30S ribosomal subunit. Forms a tight complex with proteins S10 and S14.

Binds the lower part of the 30S subunit head. Binds mRNA in the 70S ribosome, positioning it for translation. The chain is Small ribosomal subunit protein uS3 from Caldicellulosiruptor saccharolyticus (strain ATCC 43494 / DSM 8903 / Tp8T 6331).